The chain runs to 329 residues: GTP 3',8-cyclase (329 aa).

The region spanning Ala8–Ala234 is the Radical SAM core domain. Position 17 (Arg17) interacts with GTP. Residues Cys24 and Cys28 each contribute to the [4Fe-4S] cluster site. Residue Tyr30 participates in S-adenosyl-L-methionine binding. Cys31 lines the [4Fe-4S] cluster pocket. Arg68 contacts GTP. Gly72 contributes to the S-adenosyl-L-methionine binding site. A GTP-binding site is contributed by Thr99. Ser123 is a binding site for S-adenosyl-L-methionine. Lys160 contacts GTP. Residue Met194 coordinates S-adenosyl-L-methionine. Positions 257 and 260 each coordinate [4Fe-4S] cluster. Arg262 to Arg264 lines the GTP pocket. Cys274 serves as a coordination point for [4Fe-4S] cluster.

The protein belongs to the radical SAM superfamily. MoaA family. Monomer and homodimer. [4Fe-4S] cluster is required as a cofactor.

The catalysed reaction is GTP + AH2 + S-adenosyl-L-methionine = (8S)-3',8-cyclo-7,8-dihydroguanosine 5'-triphosphate + 5'-deoxyadenosine + L-methionine + A + H(+). The protein operates within cofactor biosynthesis; molybdopterin biosynthesis. Catalyzes the cyclization of GTP to (8S)-3',8-cyclo-7,8-dihydroguanosine 5'-triphosphate. This Salmonella newport (strain SL254) protein is GTP 3',8-cyclase.